The primary structure comprises 508 residues: Ribonuclease Y (508 aa).

Residues Met-1 to Asn-21 traverse the membrane as a helical segment. In terms of domain architecture, KH spans Thr-198–Val-283. The region spanning Val-324 to Ala-417 is the HD domain.

It belongs to the RNase Y family.

The protein resides in the cell membrane. Its function is as follows. Endoribonuclease that initiates mRNA decay. This is Ribonuclease Y from Thermotoga maritima (strain ATCC 43589 / DSM 3109 / JCM 10099 / NBRC 100826 / MSB8).